The chain runs to 20 residues: Phylloseptin-O1 (20 aa).

At glycine 20 the chain carries Glycine amide.

In terms of tissue distribution, expressed by the skin glands.

The protein resides in the secreted. Its function is as follows. Has antiprotozoal activity against T.cruzi. The protein is Phylloseptin-O1 (psn4) of Pithecopus oreades (Orange-legged leaf frog).